The primary structure comprises 455 residues: Bifunctional protein GlmU (455 aa).

Residues 1 to 226 form a pyrophosphorylase region; sequence MSLEIVILAA…AMEVQGANDR (226 aa). UDP-N-acetyl-alpha-D-glucosamine-binding positions include 8 to 11, Lys22, Gln73, 78 to 79, 99 to 101, Gly136, Glu151, Asn166, and Asn224; these read LAAG, GT, and YGD. Position 101 (Asp101) interacts with Mg(2+). Mg(2+) is bound at residue Asn224. Residues 227–247 form a linker region; it reads KQLAELERHYQLRAGRRLMAQ. The N-acetyltransferase stretch occupies residues 248–455; the sequence is GVTLRDPARF…WKRPEKIKKD (208 aa). UDP-N-acetyl-alpha-D-glucosamine contacts are provided by Arg330 and Lys348. The active-site Proton acceptor is the His360. UDP-N-acetyl-alpha-D-glucosamine is bound by residues Tyr363 and Asn374. Acetyl-CoA is bound by residues Ala377, 383–384, Ser402, Ala420, and Arg437; that span reads NY.

It in the N-terminal section; belongs to the N-acetylglucosamine-1-phosphate uridyltransferase family. In the C-terminal section; belongs to the transferase hexapeptide repeat family. Homotrimer. Mg(2+) serves as cofactor.

It localises to the cytoplasm. The catalysed reaction is alpha-D-glucosamine 1-phosphate + acetyl-CoA = N-acetyl-alpha-D-glucosamine 1-phosphate + CoA + H(+). The enzyme catalyses N-acetyl-alpha-D-glucosamine 1-phosphate + UTP + H(+) = UDP-N-acetyl-alpha-D-glucosamine + diphosphate. It functions in the pathway nucleotide-sugar biosynthesis; UDP-N-acetyl-alpha-D-glucosamine biosynthesis; N-acetyl-alpha-D-glucosamine 1-phosphate from alpha-D-glucosamine 6-phosphate (route II): step 2/2. It participates in nucleotide-sugar biosynthesis; UDP-N-acetyl-alpha-D-glucosamine biosynthesis; UDP-N-acetyl-alpha-D-glucosamine from N-acetyl-alpha-D-glucosamine 1-phosphate: step 1/1. The protein operates within bacterial outer membrane biogenesis; LPS lipid A biosynthesis. Its function is as follows. Catalyzes the last two sequential reactions in the de novo biosynthetic pathway for UDP-N-acetylglucosamine (UDP-GlcNAc). The C-terminal domain catalyzes the transfer of acetyl group from acetyl coenzyme A to glucosamine-1-phosphate (GlcN-1-P) to produce N-acetylglucosamine-1-phosphate (GlcNAc-1-P), which is converted into UDP-GlcNAc by the transfer of uridine 5-monophosphate (from uridine 5-triphosphate), a reaction catalyzed by the N-terminal domain. The sequence is that of Bifunctional protein GlmU from Pseudomonas fluorescens (strain ATCC BAA-477 / NRRL B-23932 / Pf-5).